Consider the following 328-residue polypeptide: GTP 3',8-cyclase (328 aa).

The 229-residue stretch at 1 to 229 (MNQVDYLRIS…DAQVRGSGPA (229 aa)) folds into the Radical SAM core domain. Arginine 8 lines the GTP pocket. Cysteine 15 and cysteine 19 together coordinate [4Fe-4S] cluster. Residue tyrosine 21 coordinates S-adenosyl-L-methionine. Cysteine 22 is a [4Fe-4S] cluster binding site. Arginine 60 contacts GTP. Glycine 64 lines the S-adenosyl-L-methionine pocket. Threonine 91 is a binding site for GTP. An S-adenosyl-L-methionine-binding site is contributed by serine 115. GTP is bound at residue lysine 155. Methionine 189 contributes to the S-adenosyl-L-methionine binding site. 2 residues coordinate [4Fe-4S] cluster: cysteine 252 and cysteine 255. A GTP-binding site is contributed by 257–259 (RMR). Cysteine 269 is a [4Fe-4S] cluster binding site.

Belongs to the radical SAM superfamily. MoaA family. Monomer and homodimer. It depends on [4Fe-4S] cluster as a cofactor.

It carries out the reaction GTP + AH2 + S-adenosyl-L-methionine = (8S)-3',8-cyclo-7,8-dihydroguanosine 5'-triphosphate + 5'-deoxyadenosine + L-methionine + A + H(+). The protein operates within cofactor biosynthesis; molybdopterin biosynthesis. Its function is as follows. Catalyzes the cyclization of GTP to (8S)-3',8-cyclo-7,8-dihydroguanosine 5'-triphosphate. This chain is GTP 3',8-cyclase, found in Trichormus variabilis (strain ATCC 29413 / PCC 7937) (Anabaena variabilis).